The following is a 124-amino-acid chain: uncharacterized protein (124 aa).

A disordered region spans residues 44–92 (DRVENSGNGTGSISAPLTDLGPSIGDSHENKGADIPIHPPLDTQSHAKD). Residues 48–58 (NSGNGTGSISA) show a composition bias toward polar residues.

This is an uncharacterized protein from Caenorhabditis elegans.